We begin with the raw amino-acid sequence, 205 residues long: MRPLTPRQAEILDLIKRNIADTGMPPTRAEIARRLGFKSANAAEEHLKALAKKGCIEIMPGTSRGIKLTQEEEPEDLGLPLIGQVAAGEPILAQEHVEQHYQVDPSMFRPSADFLLRVRGDSMKDIGILEGDLLAVHKVEQARNGQIVVARVEDDVTVKRFEKRGSTVYLHAENEEYSPIVVDLTTQSLSIEGLAVGVIRNGDWQ.

Positions 28–48 (RAEIARRLGFKSANAAEEHLK) form a DNA-binding region, H-T-H motif. Catalysis depends on for autocatalytic cleavage activity residues S122 and K159.

This sequence belongs to the peptidase S24 family. Homodimer.

The enzyme catalyses Hydrolysis of Ala-|-Gly bond in repressor LexA.. Its function is as follows. Represses a number of genes involved in the response to DNA damage (SOS response), including recA and lexA. In the presence of single-stranded DNA, RecA interacts with LexA causing an autocatalytic cleavage which disrupts the DNA-binding part of LexA, leading to derepression of the SOS regulon and eventually DNA repair. This is LexA repressor from Shewanella loihica (strain ATCC BAA-1088 / PV-4).